A 195-amino-acid polypeptide reads, in one-letter code: uncharacterized protein (195 aa).

This is an uncharacterized protein from Bacillus subtilis (strain 168).